Consider the following 404-residue polypeptide: Cysteine desulfurase IscS (404 aa).

Residues 75-76 (AT), N155, Q183, and 203-205 (SAH) each bind pyridoxal 5'-phosphate. Position 206 is an N6-(pyridoxal phosphate)lysine (K206). T243 serves as a coordination point for pyridoxal 5'-phosphate. The active-site Cysteine persulfide intermediate is C328. A [2Fe-2S] cluster-binding site is contributed by C328.

The protein belongs to the class-V pyridoxal-phosphate-dependent aminotransferase family. NifS/IscS subfamily. As to quaternary structure, homodimer. Forms a heterotetramer with IscU, interacts with other sulfur acceptors. Pyridoxal 5'-phosphate is required as a cofactor.

The protein localises to the cytoplasm. It catalyses the reaction (sulfur carrier)-H + L-cysteine = (sulfur carrier)-SH + L-alanine. The protein operates within cofactor biosynthesis; iron-sulfur cluster biosynthesis. Its function is as follows. Master enzyme that delivers sulfur to a number of partners involved in Fe-S cluster assembly, tRNA modification or cofactor biosynthesis. Catalyzes the removal of elemental sulfur atoms from cysteine to produce alanine. Functions as a sulfur delivery protein for Fe-S cluster synthesis onto IscU, an Fe-S scaffold assembly protein, as well as other S acceptor proteins. The polypeptide is Cysteine desulfurase IscS (Photorhabdus laumondii subsp. laumondii (strain DSM 15139 / CIP 105565 / TT01) (Photorhabdus luminescens subsp. laumondii)).